The chain runs to 286 residues: Pantothenate synthetase (286 aa).

30–37 (MGYFHEGH) contributes to the ATP binding site. The Proton donor role is filled by His-37. Gln-61 provides a ligand contact to (R)-pantoate. Gln-61 contributes to the beta-alanine binding site. 147–150 (GKKD) provides a ligand contact to ATP. (R)-pantoate is bound at residue Gln-153. ATP is bound at residue 184 to 187 (MSSR).

This sequence belongs to the pantothenate synthetase family. As to quaternary structure, homodimer.

The protein resides in the cytoplasm. The enzyme catalyses (R)-pantoate + beta-alanine + ATP = (R)-pantothenate + AMP + diphosphate + H(+). It functions in the pathway cofactor biosynthesis; (R)-pantothenate biosynthesis; (R)-pantothenate from (R)-pantoate and beta-alanine: step 1/1. Functionally, catalyzes the condensation of pantoate with beta-alanine in an ATP-dependent reaction via a pantoyl-adenylate intermediate. This Syntrophus aciditrophicus (strain SB) protein is Pantothenate synthetase.